A 2411-amino-acid chain; its full sequence is Polyprotein P1234 (2411 aa).

Residues 30 to 257 (EAVQTTPNDH…ESRKLLQSWH (228 aa)) enclose the Alphavirus-like MT domain. The tract at residues 242-261 (GSTLYTESRKLLQSWHLPST) is nsP1 membrane-binding. 2 S-palmitoyl cysteine; by host lipidation sites follow: Cys-415 and Cys-417. The (+)RNA virus helicase ATP-binding domain occupies 688–840 (ELVNPPFHEF…HDICSEVFHK (153 aa)). 719-726 (GVPGSGKS) is an a ribonucleoside 5'-triphosphate binding site. The (+)RNA virus helicase C-terminal domain maps to 841–989 (SISRRCTQDI…IAEWEAEHQG (149 aa)). The region spanning 1002 to 1325 (NTFMNKVNVC…RKANSIFQNT (324 aa)) is the Peptidase C9 domain. The nucleolus localization signal stretch occupies residues 1003-1022 (TFMNKVNVCWAKTLTPVLET). Cys-1011 functions as the For cysteine protease nsP2 activity in the catalytic mechanism. Positions 1056 to 1065 (TKMYGFDLDT) match the Nuclear export signal motif. Catalysis depends on His-1081, which acts as the For cysteine protease nsP2 activity. Positions 1180–1184 (PNKKI) match the Nuclear localization signal motif. A Macro domain is found at 1332 to 1491 (APAYRVKRGD…KIKEAIDHRT (160 aa)). ADP-D-ribose-binding residues include Asp-1341, Asn-1355, Gly-1363, Gly-1443, Ile-1444, and Tyr-1445. Positions 1593, 1595, 1618, and 1636 each coordinate Zn(2+). The disordered stretch occupies residues 1681-1720 (DSSIGSLPVGDTRPIPAPRTIFRPVPAPRAPVLRTTPPPK). Short sequence motifs (FGDF; binding to host G3BP1) lie at residues 1760-1763 (FGDF) and 1778-1781 (FGDF). Positions 2165–2280 (DHVLETDIAS…HGIISDKLMA (116 aa)) constitute a RdRp catalytic domain.

Interacts with non-structural protein 3. Interacts with RNA-directed RNA polymerase nsP4. Interacts with protease nsP2. interacts with itself. In terms of assembly, interacts with mRNA-capping enzyme nsP1. Interacts with host DDX1. Interacts with host DDX3. Interacts (via C-terminus) with host G3BP1; this interaction inhibits the formation of host stress granules on viral mRNAs and the nsp3-G3BP1 complexes bind viral RNAs and probably orchestrate the assembly of viral replication complexes. Interacts (via C-terminus) with host G3BP2; this interaction inhibits the formation of host stress granules on viral mRNAs and the nsp3-G3BP2 complexes bind viral RNAs and probably orchestrate the assembly of viral replication complexes. As to quaternary structure, interacts with mRNA-capping enzyme nsP1. Interacts with protease nsP2. interacts with itself. Interacts with RNA-directed RNA polymerase nsP4. Interacts with mRNA-capping enzyme nsP1. Interacts with KPNA1/karyopherin-alpha1; this interaction probably allows the active transport of protease nsP2 into the host nucleus. The cofactor is Mg(2+). Mn(2+) is required as a cofactor. Specific enzymatic cleavages in vivo yield mature proteins. The processing of the polyprotein is temporally regulated. In early stages (1.7 hpi), P1234 is first cleaved in trans through its nsP2 protease activity, releasing P123' and nsP4, which associate to form the early replication complex. At the same time, P1234 is also cut at the nsP1/nsP2 site early in infection but with lower efficiency. After replication of the viral minus-strand RNAs (4 hpi), the polyproteins are cut at the nsP1/nsP2 and nsP2/nsP3 sites very efficiently, preventing accumulation of P123' and P1234 and allowing the formation of the late replication complex. NsP3'/nsP4 site is not cleaved anymore and P34 is produced rather than nsP4. In terms of processing, specific enzymatic cleavages in vivo yield mature proteins. The processing of the polyprotein is temporally regulated. In early stages (1.7 hpi), P123 is cleaved at the nsP1/nsP2 site with low efficiency. After replication of the viral minus-strand RNAs (4 hpi), the polyproteins are cut at the nsP1/nsP2 and nsP2/nsP3 sites very efficiently, preventing accumulation of P123 and allowing the formation of the late replication complex. Post-translationally, specific enzymatic cleavages in vivo yield mature proteins. The processing of the polyprotein is temporally regulated. In early stages (1.7 hpi), P123' is cleaved at the nsP1/nsP2 site with low efficiency. After replication of the viral minus-strand RNAs (4 hpi), the polyproteins are cut at the nsP1/nsP2 and nsP2/nsP3 sites very efficiently, preventing accumulation of P123' and allowing the formation of the late replication complex. Palmitoylated by host palmitoyltransferases ZDHHC2 and ZDHHC19. In terms of processing, phosphorylated by host on serines and threonines. Post-translationally, ubiquitinated; targets the protein for rapid degradation via the ubiquitin system. Nsp4 is present in extremely low quantities due to low frequency of translation through the amber stop-codon and the degradation by the ubiquitin pathway.

The protein resides in the host cytoplasmic vesicle membrane. Its subcellular location is the host cell membrane. The protein localises to the host cell projection. It is found in the host filopodium. It localises to the host nucleus. The protein resides in the host cytoplasm. The enzyme catalyses GTP + S-adenosyl-L-methionine = N(7)-methyl-GTP + S-adenosyl-L-homocysteine. It catalyses the reaction N(7)-methyl-GTP + L-histidyl-[protein] = N(tele)-(N(7)-methylguanosine 5'-phospho)-L-histidyl-[protein] + diphosphate. The catalysed reaction is N(tele)-(N(7)-methylguanosine 5'-phospho)-L-histidyl-[protein] + a 5'-end diphospho-(purine-ribonucleoside) in mRNA + H(+) = a 5'-end (N(7)-methyl 5'-triphosphoguanosine)-(purine-ribonucleoside) in mRNA + L-histidyl-[protein]. It carries out the reaction a 5'-end triphospho-ribonucleoside in mRNA + H2O = a 5'-end diphospho-ribonucleoside in mRNA + phosphate + H(+). The enzyme catalyses a ribonucleoside 5'-triphosphate + H2O = a ribonucleoside 5'-diphosphate + phosphate + H(+). It catalyses the reaction ATP + H2O = ADP + phosphate + H(+). The catalysed reaction is RNA(n) + a ribonucleoside 5'-triphosphate = RNA(n+1) + diphosphate. It carries out the reaction RNA(n) + ATP = RNA(n)-3'-adenine ribonucleotide + diphosphate. The enzyme catalyses 4-O-(ADP-D-ribosyl)-L-aspartyl-[protein] + H2O = L-aspartyl-[protein] + ADP-D-ribose + H(+). It catalyses the reaction 5-O-(ADP-D-ribosyl)-L-glutamyl-[protein] + H2O = L-glutamyl-[protein] + ADP-D-ribose + H(+). The catalysed reaction is ADP-alpha-D-ribose 1''-phosphate + H2O = ADP-D-ribose + phosphate. In terms of biological role, inactive precursor of the viral replicase, which is activated by cleavages carried out by the viral protease nsP2. Its function is as follows. The early replication complex formed by the polyprotein P123 and nsP4 synthesizes minus-strand RNAs. As soon P123 is cleaved into mature proteins, the plus-strand RNAs synthesis begins. Functionally, the early replication complex formed by the polyprotein P123' and nsP4 synthesizes minus-strand RNAs. Polyprotein P123' is a short-lived polyprotein that accumulates during early stage of infection. As soon P123' is cleaved into mature proteins, the plus-strand RNAs synthesis begins. Cytoplasmic capping enzyme that catalyzes two virus-specific reactions: methyltransferase and nsP1 guanylyltransferase. mRNA-capping is necessary since all viral RNAs are synthesized in the cytoplasm, and host capping enzymes are restricted to the nucleus. The enzymatic reaction involves a covalent link between 7-methyl-GMP and nsP1, whereas eukaryotic capping enzymes form a covalent complex only with GMP. nsP1 capping consists in the following reactions: GTP is first methylated into 7-methyl-GMP and then is covalently linked to nsP1 to form the m7GMp-nsP1 complex from which 7-methyl-GMP complex is transferred to the mRNA to create the cap structure. NsP1 is needed for the initiation of the minus-strand RNAs synthesis. Probably serves as a membrane anchor for the replication complex composed of nsP1-nsP4. Palmitoylated nsP1 is remodeling host cell cytoskeleton, and induces filopodium-like structure formation at the surface of the host cell. In terms of biological role, multifunctional protein whose N-terminus is part of the RNA polymerase complex and displays NTPase, RNA triphosphatase and helicase activities. NTPase and RNA triphosphatase are involved in viral RNA capping and helicase keeps a check on the dsRNA replication intermediates. The C-terminus harbors a protease that specifically cleaves the polyproteins and releases the mature proteins. Required for the shutoff of minus-strand RNAs synthesis. Specifically inhibits the host IFN response by promoting the nuclear export of host STAT1. Also inhibits host transcription by inducing rapid proteasome-dependent degradation of POLR2A, a catalytic subunit of the RNAPII complex. The resulting inhibition of cellular protein synthesis serves to ensure maximal viral gene expression and to evade host immune response. Its function is as follows. Seems to be essential for minus-strand RNAs and subgenomic 26S mRNAs synthesis. Displays mono-ADP-ribosylhydrolase activity. ADP-ribosylation is a post-translational modification that controls various processes of the host cell and the virus probably needs to revert it for optimal viral replication. Binds proteins of FXR family and sequesters them into the viral RNA replication complexes thereby inhibiting the formation of host stress granules on viral mRNAs. The nsp3-FXR complexes bind viral RNAs and probably orchestrate the assembly of viral replication complexes, thanks to the ability of FXR family members to self-assemble and bind DNA. Functionally, seems to be essential for minus-strand RNAs and subgenomic 26S mRNAs synthesis. Displays mono-ADP-ribosylhydrolase activity. ADP-ribosylation is a post-translantional modification that controls various processes of the host cell and the virus probably needs to revert it for optimal viral replication. Binds proteins of G3BP family and sequesters them into the viral RNA replication complexes thereby inhibiting the formation of host stress granules on viral mRNAs. The nsp3'-G3BP complexes bind viral RNAs and probably orchestrate the assembly of viral replication complexes, thanks to the ability of G3BP family members to self-assemble and bind DNA. RNA dependent RNA polymerase. Replicates genomic and antigenomic RNA by recognizing replications specific signals. The early replication complex formed by the polyprotein P123 and nsP4 synthesizes minus-strand RNAs. The late replication complex composed of fully processed nsP1-nsP4 is responsible for the production of genomic and subgenomic plus-strand RNAs. The core catalytic domain of nsP4 also possesses terminal adenylyltransferase (TATase) activity that is probably involved in maintenance and repair of the poly(A) tail, an element required for replication of the viral genome. In Barmah forest virus (BFV), this protein is Polyprotein P1234.